We begin with the raw amino-acid sequence, 695 residues long: Calcium-binding acidic-repeat protein (695 aa).

Positions 1 to 20 (MSHLWCWLFLVLCLACLVLS) form a signal peptide, or 23. TSP type-3 repeat units lie at residues 24–38 (KDSDGDGLLDVDEIN), 47–56 (ADSDQDGLTD), 70–82 (KDTDDDSIGDGVE), 184–196 (GDSDDDGVSDGAE), 202–214 (KDSDGDGLTDEEE), and 248–260 (GDSDDDGLGDGAE). The interval 45–695 (YNADSDQDGL…TDPWRSDHSV (651 aa)) is disordered. Residues 59 to 70 (EVNRHQTHPQDK) show a composition bias toward basic and acidic residues. Acidic residues-rich tracts occupy residues 271–283 (ADSDNDGLDDGEE), 291–306 (PEDPDSDNDGLNDGDE), and 313–324 (DPEEDDSDEDGV). TSP type-3 repeat units lie at residues 294-308 (PDSDNDGLNDGDEVN), 317-329 (DDSDEDGVCDGAE), 340-352 (EDSDNDGIPDGAE), 363-375 (EDSDDDGIADGAE), 379-393 (TDSDGDGLPDEDEVA), 402-414 (ADSDYDGLTDGAE), 425-437 (KDTDDDGLGDGVE), 470-482 (EDTDDDGLTDGAE), 493-505 (ADTDDDGLTDGAE), 516-528 (ADSDGDGLSDGAE), 539-551 (GDSDDDGVPDAAE), 555-569 (KDSDGDGLSDTDEVR), 600-609 (RDTDGDGVAD), 623-635 (ADTDDDGLTDGAE), and 646-658 (ADSDDDGLSDGAE). Composition is skewed to acidic residues over residues 361–370 (NDEDSDDDGI) and 381–392 (SDGDGLPDEDEV). Acidic residues-rich tracts occupy residues 467-477 (PNDEDTDDDGL) and 491-500 (EDADTDDDGL). Residues 537 to 546 (NDGDSDDDGV) are compositionally biased toward acidic residues. Residues 589-603 (EILKHKTDPRNRDTD) show a composition bias toward basic and acidic residues. The segment covering 665-679 (NAKDGDSDDDGKADG) has biased composition (basic and acidic residues).

Its subcellular location is the secreted. The protein localises to the endoplasmic reticulum. Functionally, may function as a calcium-binding protein. The chain is Calcium-binding acidic-repeat protein from Euglena gracilis.